Here is a 216-residue protein sequence, read N- to C-terminus: Ribonuclease HII (216 aa).

An RNase H type-2 domain is found at 33 to 216 (WPVAGADEAG…RMSFRPFRQV (184 aa)). A divalent metal cation is bound by residues D39, E40, and D130.

This sequence belongs to the RNase HII family. The cofactor is Mn(2+). Mg(2+) serves as cofactor.

The protein resides in the cytoplasm. The catalysed reaction is Endonucleolytic cleavage to 5'-phosphomonoester.. Functionally, endonuclease that specifically degrades the RNA of RNA-DNA hybrids. This Rhizobium meliloti (strain 1021) (Ensifer meliloti) protein is Ribonuclease HII.